The following is a 365-amino-acid chain: Carbohydrate sulfotransferase 10 (365 aa).

The Cytoplasmic portion of the chain corresponds to 1 to 6 (MRRHWL). The chain crosses the membrane as a helical; Signal-anchor for type II membrane protein span at residues 7-27 (LVGACGWVLLILMFVSKFINF). The Lumenal portion of the chain corresponds to 28–356 (SFRIPGDYAG…RYQGDFSLFD (329 aa)). Asparagine 99 and asparagine 104 each carry an N-linked (GlcNAc...) asparagine glycan. Residues 132-138 (PKVGNTQ) and 194-202 (RDPFERLIS) each bind 3'-phosphoadenylyl sulfate. An N-linked (GlcNAc...) asparagine glycan is attached at asparagine 325.

Belongs to the sulfotransferase 2 family.

The protein localises to the golgi apparatus membrane. Its function is as follows. Catalyzes the transfer of sulfate to position 3 of terminal glucuronic acid of both protein- and lipid-linked oligosaccharides. Participates in biosynthesis of HNK-1 carbohydrate structure, a sulfated glucuronyl-lactosaminyl residue carried by many neural recognition molecules. The chain is Carbohydrate sulfotransferase 10 (chst10) from Danio rerio (Zebrafish).